Reading from the N-terminus, the 510-residue chain is Photosystem II CP47 reaction center protein (510 aa).

The Cytoplasmic portion of the chain corresponds to 2 to 16 (GLPWYRVHTVLINDP). A helical transmembrane segment spans residues 17–37 (GRLIAAHLMHTALVAGWAGSM). The Lumenal portion of the chain corresponds to 38–94 (ALYELATFDPSDPVLNPMWRQGMFVLPFMARLGVTGSWSGWSITGETGIDPGFWSFE). A helical membrane pass occupies residues 95 to 116 (GVALAHIVLSGLLFLAACWHWV). The Cytoplasmic segment spans residues 117-134 (YWDLELFRDPRTGEPALD). A helical transmembrane segment spans residues 135–157 (LPKMFGIHLFLAGLLCFGFGAFH). Over 158–196 (LTGLFGPGMWVSDPYGLTGSVQPVAPEWGPDGFNPYNPG) the chain is Lumenal. The chain crosses the membrane as a helical span at residues 197-218 (GVVAHHIAAGIVGIIAGLFHIL). The Cytoplasmic portion of the chain corresponds to 219-233 (VRPPQRLYKALRMGN). A helical membrane pass occupies residues 234–254 (IETVLSSSIAAVFFAAFVVAG). Residues 255–450 (TMWYGSATTP…GIFRTSPRGW (196 aa)) lie on the Lumenal side of the membrane. Residues 451–473 (FTFAHAVFALLFFFGHIWHGART) form a helical membrane-spanning segment. Topologically, residues 474–510 (LFRDVFSGIDPELSPEQVEWGFYQKVGDVTTRRKEAV) are cytoplasmic.

As to quaternary structure, PSII is composed of 1 copy each of membrane proteins PsbA, PsbB, PsbC, PsbD, PsbE, PsbF, PsbH, PsbI, PsbJ, PsbK, PsbL, PsbM, PsbT, PsbX, PsbY, PsbZ, Psb30/Ycf12, peripheral proteins PsbO, CyanoQ (PsbQ), PsbU, PsbV and a large number of cofactors. It forms dimeric complexes. Part of a photosystem II (PSII) assembly intermediate complex PSII-I; crystallized from a strain deleted of psbJ, it forms monomeric PSII before addition of the oxygen evolving complex. PSII-I includes 3 assembly factors not found in mature PSII (Psb27, Psb28 and Psb34). The cofactor is Binds multiple chlorophylls. PSII binds additional chlorophylls, carotenoids and specific lipids..

It is found in the cellular thylakoid membrane. Functionally, one of the components of the core complex of photosystem II (PSII). It binds chlorophyll and helps catalyze the primary light-induced photochemical processes of PSII. PSII is a light-driven water:plastoquinone oxidoreductase, using light energy to abstract electrons from H(2)O, generating O(2) and a proton gradient subsequently used for ATP formation. The protein is Photosystem II CP47 reaction center protein of Thermosynechococcus vestitus (strain NIES-2133 / IAM M-273 / BP-1).